A 324-amino-acid polypeptide reads, in one-letter code: uncharacterized protein (324 aa).

The HTH lysR-type domain maps to 6 to 63; sequence LKYRELKIISVIAASENISHAATVLGIAQANVSKYLADFESKVGLKVFDRTTRQLMLT. The H-T-H motif DNA-binding region spans 23–42; that stretch reads ISHAATVLGIAQANVSKYLA.

The protein belongs to the LysR transcriptional regulatory family.

This is an uncharacterized protein from Escherichia coli (strain K12).